Here is a 580-residue protein sequence, read N- to C-terminus: Proline--tRNA ligase (580 aa).

This sequence belongs to the class-II aminoacyl-tRNA synthetase family. ProS type 1 subfamily. As to quaternary structure, homodimer.

The protein resides in the cytoplasm. It carries out the reaction tRNA(Pro) + L-proline + ATP = L-prolyl-tRNA(Pro) + AMP + diphosphate. Catalyzes the attachment of proline to tRNA(Pro) in a two-step reaction: proline is first activated by ATP to form Pro-AMP and then transferred to the acceptor end of tRNA(Pro). As ProRS can inadvertently accommodate and process non-cognate amino acids such as alanine and cysteine, to avoid such errors it has two additional distinct editing activities against alanine. One activity is designated as 'pretransfer' editing and involves the tRNA(Pro)-independent hydrolysis of activated Ala-AMP. The other activity is designated 'posttransfer' editing and involves deacylation of mischarged Ala-tRNA(Pro). The misacylated Cys-tRNA(Pro) is not edited by ProRS. This Albidiferax ferrireducens (strain ATCC BAA-621 / DSM 15236 / T118) (Rhodoferax ferrireducens) protein is Proline--tRNA ligase.